The sequence spans 218 residues: Small ribosomal subunit protein uS3c (218 aa).

Positions 47-118 (VQKNIRISSG…KLNIAITRIS (72 aa)) constitute a KH type-2 domain.

It belongs to the universal ribosomal protein uS3 family. Part of the 30S ribosomal subunit.

The protein resides in the plastid. It is found in the chloroplast. This Nasturtium officinale (Watercress) protein is Small ribosomal subunit protein uS3c (rps3).